A 55-amino-acid chain; its full sequence is Protein CADMIUM TOLERANCE 1 (55 aa).

The chain crosses the membrane as a helical span at residues Gly-24–Tyr-40.

Belongs to the CYSTM1 family. Expressed in roots and shoots.

It is found in the cell membrane. The protein localises to the secreted. It localises to the cell wall. Confers resistance to heavy metal ions (e.g. cadmium (CdCl(2)) and copper (CuCl(2))) by chelating them at the plasma membrane of root cells, thus stopping their entry and reducing their accumulation. Binds to aluminium (Al). The sequence is that of Protein CADMIUM TOLERANCE 1 from Oryza sativa subsp. japonica (Rice).